The primary structure comprises 261 residues: Claudin-18 (261 aa).

The Cytoplasmic portion of the chain corresponds to 1-6; the sequence is MSTTTC. Residues 7 to 27 form a helical membrane-spanning segment; it reads QVVAFLLSILGLAGCIAATGM. Over 28-80 the chain is Extracellular; the sequence is DMWSTQDLYDNPVTSVFQYEGLWRSCVRQSSGFTECRPYFTILGLPAMLQAVR. A helical membrane pass occupies residues 81-101; it reads ALMIVGIVLGAIGLLVSIFAL. Residues 102 to 122 are Cytoplasmic-facing; that stretch reads KCIRIGSMEDSAKANMTLTSG. Residues 123–143 form a helical membrane-spanning segment; that stretch reads IMFIVSGLCAIAGVSVFANML. The Extracellular segment spans residues 144 to 174; it reads VTNFWMSTANMYTGMGGMVQTVQTRYTFGAA. The helical transmembrane segment at 175–195 threads the bilayer; it reads LFVGWVAGGLTLIGGVMMCIA. The required for role in regulation of RANKL-induced osteoclast differentiation stretch occupies residues 195-261; the sequence is ACRGLAPEET…QSYPSKHDYV (67 aa). The Cytoplasmic segment spans residues 196-261; that stretch reads CRGLAPEETN…QSYPSKHDYV (66 aa). Ser-214 is subject to Phosphoserine. The disordered stretch occupies residues 242–261; it reads DGGARTEDEVQSYPSKHDYV.

Belongs to the claudin family. As to quaternary structure, interacts with TJP2/ZO-2. Interacts with TJP1/ZO-1. Interacts with YAP1 (phosphorylated); the interaction sequesters YAP1 away from the nucleus and thereby restricts transcription of YAP1 target genes. In terms of assembly, interacts with CLDN19. Expression is restricted to the lung. As to expression, expression is restricted to the stomach mucosa where it is predominantly observed in the epithelial cells of the pit region and the base of the gastric glands including exocrine and endocrine cells (at protein level).

The protein resides in the cell junction. The protein localises to the tight junction. It is found in the cell membrane. Its subcellular location is the lateral cell membrane. In terms of biological role, involved in alveolar fluid homeostasis via regulation of alveolar epithelial tight junction composition and therefore ion transport and solute permeability, potentially via downstream regulation of the actin cytoskeleton organization and beta-2-adrenergic signaling. Required for lung alveolarization and maintenance of the paracellular alveolar epithelial barrier. Acts to maintain epithelial progenitor cell proliferation and organ size, via regulation of YAP1 localization away from the nucleus and thereby restriction of YAP1 target gene transcription. Acts as a negative regulator of RANKL-induced osteoclast differentiation, potentially via relocation of TJP2/ZO-2 away from the nucleus, subsequently involved in bone resorption in response to calcium deficiency. Mediates the osteoprotective effects of estrogen, potentially via acting downstream of estrogen signaling independently of RANKL signaling pathways. Functionally, involved in the maintenance of homeostasis of the alveolar microenvironment via regulation of pH and subsequent T-cell activation in the alveolar space, is therefore indirectly involved in limiting C.neoformans infection. Required for the formation of the gastric paracellular barrier via its role in tight junction formation, thereby involved in the response to gastric acidification. The protein is Claudin-18 (CLDN18) of Homo sapiens (Human).